The following is a 529-amino-acid chain: Peptide chain release factor 3 (529 aa).

The region spanning asparagine 11–glutamine 280 is the tr-type G domain. Residues serine 20–threonine 27, aspartate 88–histidine 92, and asparagine 142–aspartate 145 each bind GTP.

The protein belongs to the TRAFAC class translation factor GTPase superfamily. Classic translation factor GTPase family. PrfC subfamily.

It is found in the cytoplasm. Its function is as follows. Increases the formation of ribosomal termination complexes and stimulates activities of RF-1 and RF-2. It binds guanine nucleotides and has strong preference for UGA stop codons. It may interact directly with the ribosome. The stimulation of RF-1 and RF-2 is significantly reduced by GTP and GDP, but not by GMP. This is Peptide chain release factor 3 (prfC) from Pasteurella multocida (strain Pm70).